The chain runs to 861 residues: Bifunctional uridylyltransferase/uridylyl-removing enzyme (861 aa).

The tract at residues 1–321 (MKNDNRIIKN…VYHQKQKIIR (321 aa)) is uridylyltransferase. A uridylyl-removing region spans residues 322-678 (LDDEFQLSNR…IMPHHSQGGT (357 aa)). In terms of domain architecture, HD spans 440-562 (VDQHTLFVIR…LPHAKYLDYL (123 aa)). ACT domains follow at residues 679-760 (EVFI…AVSR) and 788-861 (QLFL…KSKY).

The protein belongs to the GlnD family. Requires Mg(2+) as cofactor.

The enzyme catalyses [protein-PII]-L-tyrosine + UTP = [protein-PII]-uridylyl-L-tyrosine + diphosphate. It catalyses the reaction [protein-PII]-uridylyl-L-tyrosine + H2O = [protein-PII]-L-tyrosine + UMP + H(+). Its activity is regulated as follows. Uridylyltransferase (UTase) activity is inhibited by glutamine, while glutamine activates uridylyl-removing (UR) activity. In terms of biological role, modifies, by uridylylation and deuridylylation, the PII regulatory proteins (GlnB and homologs), in response to the nitrogen status of the cell that GlnD senses through the glutamine level. Under low glutamine levels, catalyzes the conversion of the PII proteins and UTP to PII-UMP and PPi, while under higher glutamine levels, GlnD hydrolyzes PII-UMP to PII and UMP (deuridylylation). Thus, controls uridylylation state and activity of the PII proteins, and plays an important role in the regulation of nitrogen assimilation and metabolism. In Legionella pneumophila (strain Lens), this protein is Bifunctional uridylyltransferase/uridylyl-removing enzyme.